The chain runs to 223 residues: Deoxyribose-phosphate aldolase (223 aa).

Asp92 serves as the catalytic Proton donor/acceptor. The active-site Schiff-base intermediate with acetaldehyde is Lys154. The Proton donor/acceptor role is filled by Lys182.

It belongs to the DeoC/FbaB aldolase family. DeoC type 1 subfamily.

It localises to the cytoplasm. The catalysed reaction is 2-deoxy-D-ribose 5-phosphate = D-glyceraldehyde 3-phosphate + acetaldehyde. It functions in the pathway carbohydrate degradation; 2-deoxy-D-ribose 1-phosphate degradation; D-glyceraldehyde 3-phosphate and acetaldehyde from 2-deoxy-alpha-D-ribose 1-phosphate: step 2/2. Functionally, catalyzes a reversible aldol reaction between acetaldehyde and D-glyceraldehyde 3-phosphate to generate 2-deoxy-D-ribose 5-phosphate. This chain is Deoxyribose-phosphate aldolase, found in Haemophilus influenzae (strain ATCC 51907 / DSM 11121 / KW20 / Rd).